Here is a 254-residue protein sequence, read N- to C-terminus: U3 small nucleolar RNA-associated protein NOL7 (254 aa).

Positions 1 to 90 are disordered; sequence MVQLRPRLSR…ASARRDKTLL (90 aa). 2 stretches are compositionally biased toward acidic residues: residues 18-31 and 48-61; these read MVDEDQAASEEEEA and PLDEEEDADDEAPE. Residues 71 to 90 show a composition bias toward basic and acidic residues; the sequence is EAREEELRVRASARRDKTLL. Residue Lys127 forms a Glycyl lysine isopeptide (Lys-Gly) (interchain with G-Cter in SUMO2) linkage. Position 129 is a phosphoserine (Ser129). Residue Lys157 forms a Glycyl lysine isopeptide (Lys-Gly) (interchain with G-Cter in SUMO2) linkage. Residues 235 to 254 form a disordered region; sequence NAKRFKKRWMAKKMKKKTYK.

Belongs to the UTP16 family. As to quaternary structure, part of the small subunit (SSU) processome, composed of more than 70 proteins and the RNA chaperone small nucleolar RNA (snoRNA) U3.

Its subcellular location is the nucleus. The protein localises to the nucleolus. In terms of biological role, functions as part of the small subunit (SSU) processome, first precursor of the small eukaryotic ribosomal subunit that coordinates the first two steps of ribosome biogenesis in transcription of the primary transcript pre-RNA and pre-18S processing. During the assembly of the SSU processome in the nucleolus, many ribosome biogenesis factors, an RNA chaperone and ribosomal proteins associate with the nascent pre-rRNA and work in concert to generate RNA folding, modifications, rearrangements and cleavage as well as targeted degradation of pre-ribosomal RNA by the RNA exosome. This subunit is required for processing of the 5'-external transcribed spacer sequence (5'ETS) of the primary transcript pre-rRNA to yield the 18S rRNA. Also plays a role in maintaining early pre-rRNA levels, either by assisting in its transcription or stability. This Mus musculus (Mouse) protein is U3 small nucleolar RNA-associated protein NOL7 (Nol7).